We begin with the raw amino-acid sequence, 1094 residues long: Transcriptional regulator CRZ1 (1094 aa).

Disordered regions lie at residues 1–29 (MADP…STSS), 44–81 (FNSD…LDMM), 93–428 (GRRQ…FPPS), and 477–519 (RAGA…RTLS). 2 stretches are compositionally biased toward basic and acidic residues: residues 60–78 (QARK…KRYL) and 94–103 (RRQESLRKES). Ser-103 carries the post-translational modification Phosphoserine. The span at 148-159 (PNQPQQPSQQPP) shows a compositional bias: low complexity. Composition is skewed to polar residues over residues 166–187 (SEQS…QSSG) and 201–217 (GTTS…QISP). 2 stretches are compositionally biased toward low complexity: residues 228–241 (QPPQ…QQQQ) and 252–262 (EQQQQYAQGEG). Positions 286–324 (VISNTSHPSQYPSRTSSPFPQQSQSNMVPASTVNQTRTE) are enriched in polar residues. A phosphoserine mark is found at Ser-288 and Ser-329. A compositionally biased stretch (low complexity) spans 325-342 (SFPASRSPSPFAPQQASQ). 2 stretches are compositionally biased toward polar residues: residues 343–379 (TEAS…FNKP) and 396–412 (IVTQ…LNQP). Low complexity predominate over residues 477 to 493 (RAGAARGAQRQGPQGQG). A compositionally biased stretch (polar residues) spans 507 to 519 (PSPQSHPLPRTLS). Residues Ser-508, Ser-569, Ser-765, and Ser-810 each carry the phosphoserine modification. The interval 835–888 (ITGDDGSLLPPSNRGHAMSHSRHSSTSSIRSASPALSISSQGSSFSHHSPRMDM) is disordered. The segment covering 858–881 (SSTSSIRSASPALSISSQGSSFSH) has biased composition (low complexity). The segment at 944 to 968 (FKCPVPGCGSTFTRHFNLKGHLRSH) adopts a C2H2-type 1 zinc-finger fold. The C2H2-type 2; degenerate zinc-finger motif lies at 1007–1029 (FECEGCGKKFARLDALTRHHKSE). Positions 1037–1094 (THPLPTNFDGSPMSESQYKTYKGIKSTPEGSGRRLSSTASGSGSGKRRSKKSETSEED) are disordered.

In terms of processing, phosphorylated. Dephosphorylated by calcineurin (CNA1) which promotes nuclear localization.

The protein resides in the cytoplasm. It localises to the cytosol. It is found in the nucleus. DNA-binding transcriptional activator that interacts with calcineurin-dependent response element (CDRE) promoters. Activates expression of genes required to maintain cell wall integrity during stress. Activates expression of genes required for transepithelial migration through the host blood-brain barrier. Required for adaptation to host temperature during infection. This is Transcriptional regulator CRZ1 from Cryptococcus neoformans var. grubii serotype A (strain H99 / ATCC 208821 / CBS 10515 / FGSC 9487) (Filobasidiella neoformans var. grubii).